The chain runs to 213 residues: E3 ubiquitin-protein ligase NleG8 (213 aa).

The tract at residues 136–189 (CPITLCVPETGVFVKNARCSKVCSLYDISALTEMLRRNASHPLSREAFTPGMIV) is RING/U-box domain. The PDZ-binding motif motif lies at 211–213 (TRL).

The protein belongs to the NleG E3 ligase family. Interacts with host GOPC (human protein).

The protein resides in the secreted. It is found in the host cytoplasm. The catalysed reaction is S-ubiquitinyl-[E2 ubiquitin-conjugating enzyme]-L-cysteine + [acceptor protein]-L-lysine = [E2 ubiquitin-conjugating enzyme]-L-cysteine + N(6)-ubiquitinyl-[acceptor protein]-L-lysine.. Effector proteins function to alter host cell physiology and promote bacterial survival in host tissues. This protein is an E3 ubiquitin-protein ligase that probably interferes with the host's ubiquitination pathway and targets host proteins for proteasomal degradation. Mice infected with a strain of bacteria deleted for this gene had an increased survival rate. Can be ubiquitinylated, and ubiquitinate ubiquitin, giving rise to polyubiquitin chains (in vitro). The polypeptide is E3 ubiquitin-protein ligase NleG8 (Citrobacter rodentium).